Consider the following 1178-residue polypeptide: DNA-directed RNA polymerase subunit beta' (1178 aa).

Positions 60, 62, 75, and 78 each coordinate Zn(2+). Residues aspartate 450, aspartate 452, and aspartate 454 each contribute to the Mg(2+) site. Cysteine 795, cysteine 869, cysteine 876, and cysteine 879 together coordinate Zn(2+).

It belongs to the RNA polymerase beta' chain family. The RNAP catalytic core consists of 2 alpha, 1 beta, 1 beta' and 1 omega subunit. When a sigma factor is associated with the core the holoenzyme is formed, which can initiate transcription. The cofactor is Mg(2+). Zn(2+) is required as a cofactor.

It catalyses the reaction RNA(n) + a ribonucleoside 5'-triphosphate = RNA(n+1) + diphosphate. Its function is as follows. DNA-dependent RNA polymerase catalyzes the transcription of DNA into RNA using the four ribonucleoside triphosphates as substrates. In Clostridium botulinum (strain Okra / Type B1), this protein is DNA-directed RNA polymerase subunit beta'.